Consider the following 399-residue polypeptide: Enolase (399 aa).

Gln-149 is a binding site for (2R)-2-phosphoglycerate. The active-site Proton donor is Glu-191. Mg(2+) contacts are provided by Asp-227, Glu-268, and Asp-293. Residues Lys-318, Arg-347, Ser-348, and Lys-369 each coordinate (2R)-2-phosphoglycerate. Lys-318 (proton acceptor) is an active-site residue.

Belongs to the enolase family. It depends on Mg(2+) as a cofactor.

Its subcellular location is the cytoplasm. It is found in the secreted. The protein resides in the cell surface. It carries out the reaction (2R)-2-phosphoglycerate = phosphoenolpyruvate + H2O. Its pathway is carbohydrate degradation; glycolysis; pyruvate from D-glyceraldehyde 3-phosphate: step 4/5. Catalyzes the reversible conversion of 2-phosphoglycerate (2-PG) into phosphoenolpyruvate (PEP). It is essential for the degradation of carbohydrates via glycolysis. In Archaeoglobus fulgidus (strain ATCC 49558 / DSM 4304 / JCM 9628 / NBRC 100126 / VC-16), this protein is Enolase.